The sequence spans 132 residues: Small ribosomal subunit protein uS8c (132 aa).

The protein belongs to the universal ribosomal protein uS8 family. In terms of assembly, part of the 30S ribosomal subunit.

Its subcellular location is the plastid. It localises to the chloroplast. In terms of biological role, one of the primary rRNA binding proteins, it binds directly to 16S rRNA central domain where it helps coordinate assembly of the platform of the 30S subunit. The protein is Small ribosomal subunit protein uS8c (rps8) of Dioscorea elephantipes (Elephant's foot yam).